The sequence spans 515 residues: Zinc metalloproteinase-disintegrin BA-5A (515 aa).

The signal sequence occupies residues 1 to 20; it reads MMQVLLVTICLAVFPYQGSS. Residues 21–193 constitute a propeptide that is removed on maturation; sequence IILESGNVND…KEASQLVATS (173 aa). In terms of domain architecture, Peptidase M12B spans 203–399; it reads RYIKYFIVVD…YKPDCTLIRP (197 aa). N-linked (GlcNAc...) asparagine glycosylation occurs at asparagine 263. Cystine bridges form between cysteine 314–cysteine 394, cysteine 354–cysteine 378, cysteine 356–cysteine 361, cysteine 410–cysteine 429, cysteine 421–cysteine 439, cysteine 423–cysteine 434, cysteine 433–cysteine 456, cysteine 447–cysteine 453, cysteine 452–cysteine 478, cysteine 465–cysteine 485, and cysteine 472–cysteine 497. Histidine 339 is a Zn(2+) binding site. Glutamate 340 is an active-site residue. Zn(2+) is bound by residues histidine 343 and histidine 349. N-linked (GlcNAc...) asparagine glycosylation is present at asparagine 377. Residues 407-493 form the Disintegrin domain; it reads PPVCGNDILE…DCPIDHFHRN (87 aa). The short motif at 471-473 is the D/ECD-tripeptide element; it reads ECD.

The protein belongs to the venom metalloproteinase (M12B) family. P-II subfamily. As to quaternary structure, monomer. It depends on Zn(2+) as a cofactor. Expressed by the venom gland.

The protein resides in the secreted. Its function is as follows. Snake venom zinc metalloprotease that possesses hemorrhagic activity and degrades alpha chain of fibrinogen (FGA). May inhibit alpha-2/beta-1 integrin (ITGA2/ITGB1). This Bitis arietans (African puff adder) protein is Zinc metalloproteinase-disintegrin BA-5A.